A 69-amino-acid chain; its full sequence is DNA gyrase inhibitor YacG (69 aa).

Zn(2+)-binding residues include C13, C16, C32, and C36.

It belongs to the DNA gyrase inhibitor YacG family. In terms of assembly, interacts with GyrB. The cofactor is Zn(2+).

In terms of biological role, inhibits all the catalytic activities of DNA gyrase by preventing its interaction with DNA. Acts by binding directly to the C-terminal domain of GyrB, which probably disrupts DNA binding by the gyrase. In Neisseria meningitidis serogroup A / serotype 4A (strain DSM 15465 / Z2491), this protein is DNA gyrase inhibitor YacG.